Here is a 252-residue protein sequence, read N- to C-terminus: MRILLTNDDGIHAEGLAVLERVARTLSDDVWVVAPETDQSGFAHSLSLSEPLRMRKIDDRHYALRGTPTDCVIMGVRKVMDRPPDLILSGVNSGTNLADDVTYSGTVAGAMEGTLLGIRSIAFSLGYSFVEDIRVVQWETAEVLGPALLKKLVGASLPQGVFLNVNFPRCTPEAVKGTLVTSQGKLVHGLSVEERRDGRGFPYYWLRFGRQESEIRAGTDQAAIRDGYVSVTPLHLDLTAHAVRDRLAKALA.

The a divalent metal cation site is built by Asp-8, Asp-9, Ser-40, and Asn-92.

This sequence belongs to the SurE nucleotidase family. It depends on a divalent metal cation as a cofactor.

It is found in the cytoplasm. It carries out the reaction a ribonucleoside 5'-phosphate + H2O = a ribonucleoside + phosphate. Nucleotidase that shows phosphatase activity on nucleoside 5'-monophosphates. This chain is 5'-nucleotidase SurE, found in Chelativorans sp. (strain BNC1).